Here is a 96-residue protein sequence, read N- to C-terminus: UPF0235 protein VIBHAR_03581 (96 aa).

This sequence belongs to the UPF0235 family.

The polypeptide is UPF0235 protein VIBHAR_03581 (Vibrio campbellii (strain ATCC BAA-1116)).